The chain runs to 819 residues: Glycine-rich domain-containing protein 1 (819 aa).

Plays a regulatory role in abscisic acid (ABA) signaling and tolerance to abiotic stress during germination. May be involved in the regulation of the ABI transcriptional factors. The sequence is that of Glycine-rich domain-containing protein 1 from Arabidopsis thaliana (Mouse-ear cress).